The chain runs to 154 residues: Superoxide dismutase [Cu-Zn] (154 aa).

Cu cation is bound by residues histidine 47, histidine 49, and histidine 64. Cysteine 58 and cysteine 147 form a disulfide bridge. Positions 64, 72, 81, and 84 each coordinate Zn(2+). Position 121 (histidine 121) interacts with Cu cation. Positions 125–136 are enriched in basic and acidic residues; sequence DDLGKGGNEESL. Positions 125 to 144 are disordered; it reads DDLGKGGNEESLKTGNAGPR. Arginine 144 lines the substrate pocket.

Belongs to the Cu-Zn superoxide dismutase family. Homodimer. Requires Cu cation as cofactor. Zn(2+) serves as cofactor.

The protein localises to the cytoplasm. It carries out the reaction 2 superoxide + 2 H(+) = H2O2 + O2. Functionally, destroys radicals which are normally produced within the cells and which are toxic to biological systems. This Cordyceps tenuipes (Entomopathogenic fungus) protein is Superoxide dismutase [Cu-Zn] (SOD1).